We begin with the raw amino-acid sequence, 946 residues long: Protein translocase subunit SecA (946 aa).

ATP contacts are provided by residues glutamine 87, 105-109 (GEGKT), and aspartate 524. The interval 904–933 (PAQTTDKADRDPNKPETWGKVGRNEDCPCG) is disordered. Zn(2+)-binding residues include cysteine 930, cysteine 932, cysteine 941, and histidine 942.

Belongs to the SecA family. In terms of assembly, monomer and homodimer. Part of the essential Sec protein translocation apparatus which comprises SecA, SecYEG and auxiliary proteins SecDF-YajC and YidC. Zn(2+) is required as a cofactor.

Its subcellular location is the cell inner membrane. It localises to the cytoplasm. It carries out the reaction ATP + H2O + cellular proteinSide 1 = ADP + phosphate + cellular proteinSide 2.. In terms of biological role, part of the Sec protein translocase complex. Interacts with the SecYEG preprotein conducting channel. Has a central role in coupling the hydrolysis of ATP to the transfer of proteins into and across the cell membrane, serving both as a receptor for the preprotein-SecB complex and as an ATP-driven molecular motor driving the stepwise translocation of polypeptide chains across the membrane. The polypeptide is Protein translocase subunit SecA (Rhodopseudomonas palustris (strain TIE-1)).